A 141-amino-acid chain; its full sequence is MLSPKRTKYRKAHKGRIHGTAKGGTSLNFGAYGLKAVEPMRVTARQIESARRAITRHLKRQGRVWIRIFPDLPVSTKPAEVRMGSGKGSPEFWAARVHPGRIMFEVDGVPLDLAKRAFELAAAKLPIKTRFITRLGEGGEA.

It belongs to the universal ribosomal protein uL16 family. As to quaternary structure, part of the 50S ribosomal subunit.

Its function is as follows. Binds 23S rRNA and is also seen to make contacts with the A and possibly P site tRNAs. This is Large ribosomal subunit protein uL16 from Rhodospirillum centenum (strain ATCC 51521 / SW).